We begin with the raw amino-acid sequence, 193 residues long: Ion-translocating oxidoreductase complex subunit A (193 aa).

The next 6 membrane-spanning stretches (helical) occupy residues 4 to 24 (FLLL…QFLG), 39 to 59 (IGMS…SYLV), 63 to 83 (ILLP…VIAV), 102 to 122 (LLGI…VALL), 134 to 154 (VIYG…FAAM), and 171 to 191 (SISM…TGLV).

This sequence belongs to the NqrDE/RnfAE family. As to quaternary structure, the complex is composed of six subunits: RnfA, RnfB, RnfC, RnfD, RnfE and RnfG.

It is found in the cell inner membrane. Functionally, part of a membrane-bound complex that couples electron transfer with translocation of ions across the membrane. This Pseudoalteromonas atlantica (strain T6c / ATCC BAA-1087) protein is Ion-translocating oxidoreductase complex subunit A.